The sequence spans 1260 residues: Paraclostridial mosquitocidal protein 1 (1260 aa).

Residue H208 coordinates Zn(2+). E209 serves as the catalytic Proton acceptor. Residues H212 and E248 each contribute to the Zn(2+) site. C395 and C406 are disulfide-bonded. The interval 401-824 is translocation domain (TD); sequence NRVNICIDVN…NIQSIPDFDI (424 aa). The HCN stretch occupies residues 825–1065; it reads NALIDRLGIQ…SYFNSNILRD (241 aa). The segment at 1066–1260 is HCC; the sequence is FWGEPLEYNK…FVSEDEGWKE (195 aa).

The protein belongs to the peptidase M27 family. It depends on Zn(2+) as a cofactor.

It carries out the reaction Limited hydrolysis of proteins of the neuroexocytosis apparatus, synaptobrevins, SNAP25 or syntaxin. No detected action on small molecule substrates.. Preincubation with the metalloprotease inhibitor 1,10-phenanthroline before injection into Anopheles or Aedes decreases toxicity. Neurotoxin active against Anopheles but not Aedes mosquitoes upon oral ingestion; expression of the ptox operon (ntnh-orfX1-orfX2-orfX3-pmp1) in B.thuringiensis kills Anopheles but not Aedes mosquito 3rd instar larvae. The ntnh-pmp1 construct is about half as toxic. PMP1 is toxic when injected directly into Anopheles or Aedes mosquito 3rd instar larvae, larvae no longer move, suggesting they are paralyzed. Adult mosquitoes (Anopheles or Aedes) and Drosophila lose the ability to fly in a dose-dependent manner by 24 hours after injection with 100 pg neurotoxin. Not toxic upon injection in mice. Its function is as follows. Neurotoxin that cleaves A.gambiae syntaxin 1a, probably hydrolyzing the '240-Glu-|-His-241' bond. Does not cleave A.gambiae n-synaptobrevin or SNAP-25, nor human syntaxin 1A. In terms of biological role, responsible for host epithelial cell transcytosis, host nerve cell targeting and translocation of PMP1 light chain (LC) into host cytosol. Composed of 3 subdomains; the translocation domain (TD), and N-terminus and C-terminus of the receptor-binding domain (RBD), called HCN and HCC. This Paraclostridium bifermentans (Clostridium bifermentans) protein is Paraclostridial mosquitocidal protein 1.